A 368-amino-acid chain; its full sequence is N-acetylneuraminate epimerase (368 aa).

The N-terminal stretch at 1–19 (MNKTIMALAIMMASFAANA) is a signal peptide. Kelch repeat units follow at residues 40–84 (TVYI…AFID), 86–137 (NLYV…FVHN), 139–173 (KAYVTGGVNQNIFNGYFEDLNEAGKDSTAIDKINA), 174–219 (HYFD…VNKG), 222–265 (TWLI…VAGG), 287–336 (ENYQ…PWNN), and 338–367 (LLIIGGETAGGKAVTDSVLISVKDNKVTVQ). The active-site Proton acceptor is the Glu228.

This sequence belongs to the NanM family. As to quaternary structure, homodimer.

It is found in the periplasm. It catalyses the reaction N-acetyl-alpha-neuraminate = N-acetyl-beta-neuraminate. In terms of biological role, converts alpha-N-acetylneuranimic acid (Neu5Ac) to the beta-anomer, accelerating the equilibrium between the alpha- and beta-anomers. Probably facilitates sialidase-negative bacteria to compete successfully for limited amounts of extracellular Neu5Ac, which is likely taken up in the beta-anomer. In addition, the rapid removal of sialic acid from solution might be advantageous to the bacterium to damp down host responses. In Shigella flexneri serotype 5b (strain 8401), this protein is N-acetylneuraminate epimerase.